The following is a 509-amino-acid chain: Cobyric acid synthase (509 aa).

The region spanning 262–459 is the GATase cobBQ-type domain; sequence EIKVGIIKLP…IHGIFENDIW (198 aa). Catalysis depends on Cys-343, which acts as the Nucleophile. The active site involves His-451.

Belongs to the CobB/CobQ family. CobQ subfamily.

It participates in cofactor biosynthesis; adenosylcobalamin biosynthesis. Functionally, catalyzes amidations at positions B, D, E, and G on adenosylcobyrinic A,C-diamide. NH(2) groups are provided by glutamine, and one molecule of ATP is hydrogenolyzed for each amidation. The chain is Cobyric acid synthase from Prochlorococcus marinus (strain MIT 9312).